Here is a 485-residue protein sequence, read N- to C-terminus: Probable phosphomannomutase (485 aa).

Ser-86 (phosphoserine intermediate) is an active-site residue. Ser-86, Asp-236, Asp-238, and Asp-240 together coordinate Mg(2+).

It belongs to the phosphohexose mutase family. The cofactor is Mg(2+).

It carries out the reaction alpha-D-mannose 1-phosphate = D-mannose 6-phosphate. The protein is Probable phosphomannomutase of Haemophilus influenzae (strain ATCC 51907 / DSM 11121 / KW20 / Rd).